The chain runs to 829 residues: Periplasmic nitrate reductase (829 aa).

Positions Met1–Ala29 form a signal peptide, tat-type signal. Residues Ile41–Asp97 enclose the 4Fe-4S Mo/W bis-MGD-type domain. [4Fe-4S] cluster is bound by residues Cys48, Cys51, Cys55, and Cys83. Mo-bis(molybdopterin guanine dinucleotide) is bound by residues Lys85, Gln152, Asn177, Cys181, Trp214–Met221, Ser245–His249, Gln264–Asp266, Met374, Gln378, Asn484, Ser510–Asp511, Lys533, Asp560, and Thr718–Thr727. Phe794 is a binding site for substrate. Residues Asn802 and Lys819 each contribute to the Mo-bis(molybdopterin guanine dinucleotide) site.

It belongs to the prokaryotic molybdopterin-containing oxidoreductase family. NasA/NapA/NarB subfamily. As to quaternary structure, component of the periplasmic nitrate reductase NapAB complex composed of NapA and NapB. [4Fe-4S] cluster is required as a cofactor. Mo-bis(molybdopterin guanine dinucleotide) serves as cofactor. Predicted to be exported by the Tat system. The position of the signal peptide cleavage has not been experimentally proven.

The protein localises to the periplasm. The catalysed reaction is 2 Fe(II)-[cytochrome] + nitrate + 2 H(+) = 2 Fe(III)-[cytochrome] + nitrite + H2O. Catalytic subunit of the periplasmic nitrate reductase complex NapAB. Receives electrons from NapB and catalyzes the reduction of nitrate to nitrite. The protein is Periplasmic nitrate reductase of Aliivibrio fischeri (strain MJ11) (Vibrio fischeri).